A 275-amino-acid chain; its full sequence is Diaminopimelate epimerase (275 aa).

Substrate is bound by residues asparagine 12, glutamine 45, and asparagine 65. The Proton donor role is filled by cysteine 74. Residues 75 to 76 (GN), asparagine 158, asparagine 191, and 209 to 210 (ER) each bind substrate. Cysteine 218 serves as the catalytic Proton acceptor. Residue 219–220 (GS) coordinates substrate.

Belongs to the diaminopimelate epimerase family. In terms of assembly, homodimer.

It localises to the cytoplasm. The enzyme catalyses (2S,6S)-2,6-diaminopimelate = meso-2,6-diaminopimelate. It functions in the pathway amino-acid biosynthesis; L-lysine biosynthesis via DAP pathway; DL-2,6-diaminopimelate from LL-2,6-diaminopimelate: step 1/1. In terms of biological role, catalyzes the stereoinversion of LL-2,6-diaminopimelate (L,L-DAP) to meso-diaminopimelate (meso-DAP), a precursor of L-lysine and an essential component of the bacterial peptidoglycan. This Shewanella amazonensis (strain ATCC BAA-1098 / SB2B) protein is Diaminopimelate epimerase.